The chain runs to 154 residues: MRVYFILILAVATVSGATSEMLSFQNAIQSSGGAKIETSAGRLLRAELTTDETYPEERTSLAAVEKLNAKTKDVLKDKWDAANVKYQSPFIYNDGIGQSIMKRNIDPDKVFKYLTQQKLDRTIGENPQYGLWKAYLELWKKNHPRWKSKLQTVD.

The signal sequence occupies residues 1 to 16; the sequence is MRVYFILILAVATVSG. Positions 42 to 58 match the RxLR-dEER motif; it reads RLLRAELTTDETYPEER.

Belongs to the RxLR effector family.

It is found in the secreted. The protein resides in the host nucleus. It localises to the host cytoplasm. Effector that enhances P.infestans colonization of Nicotiana benthamiana leaves. The polypeptide is RxLR effector protein PITG_12737 (Phytophthora infestans (strain T30-4) (Potato late blight agent)).